The sequence spans 468 residues: Nuclear pore complex protein Nup50 (468 aa).

Residues 1 to 16 (MAKRNAEKELTDRNWD) are compositionally biased toward basic and acidic residues. The tract at residues 1-26 (MAKRNAEKELTDRNWDQEDEAEEVGT) is disordered. Position 2 is an N-acetylalanine (alanine 2). Residue lysine 8 is modified to N6-acetyllysine. Serine 52 bears the Phosphoserine mark. Repeat 1 spans residues 76–77 (FG). A 5 X 2 AA repeats of F-G region spans residues 76-304 (FGSGAGGKPL…FSPGNSSLFG (229 aa)). N6-acetyllysine is present on lysine 83. The stretch at 113 to 114 (FG) is repeat 2. 2 disordered regions span residues 122-148 (TTLV…LASS) and 201-224 (HGNS…SPSL). Position 127 is an N6-acetyllysine (lysine 127). Low complexity predominate over residues 137–148 (SQQPSSSGLASS). The segment at 144–206 (GLASSKACVG…IEQQHGNSGR (63 aa)) is binding to CDKN1B. Serine 208 and serine 221 each carry phosphoserine. Residues 225–226 (FG) form repeat 3. Residue serine 234 is modified to Phosphoserine. Residues 238-269 (FHGNKTEDTPDKKMEVASEKKTDPSSLGATSA) form a disordered region. Residues 241-260 (NKTEDTPDKKMEVASEKKTD) are compositionally biased toward basic and acidic residues. A phosphothreonine mark is found at threonine 246 and threonine 259. Serine 270 carries the post-translational modification Phosphoserine. Copy 4 of the repeat occupies 273–274 (FG). Serine 296 carries the post-translational modification Phosphoserine. Copy 5 of the repeat occupies 303-304 (FG). The segment covering 304–317 (GKDTTQSKPVSSPF) has biased composition (polar residues). The interval 304-345 (GKDTTQSKPVSSPFPTKPLEGQAEGDSGECKGGDEEENDEPP) is disordered. In terms of domain architecture, RanBD1 spans 335–468 (GGDEEENDEP…HKILLEKKDA (134 aa)). Residue lysine 353 forms a Glycyl lysine isopeptide (Lys-Gly) (interchain with G-Cter in SUMO2) linkage. Lysine 450 carries the N6-acetyllysine modification.

Interacts with Importin alpha-2, Importin beta, Importin beta-2, NUP153, Ran binding protein 7, CDKN1B and itself. Does not interact with TPR. In terms of tissue distribution, ubiquitous. Highest levels in testis, peripheral blood leukocytes and fetal liver.

The protein localises to the nucleus. The protein resides in the nuclear pore complex. It localises to the nucleus membrane. Component of the nuclear pore complex that has a direct role in nuclear protein import. Actively displaces NLSs from importin-alpha, and facilitates disassembly of the importin-alpha:beta-cargo complex and importin recycling. Interacts with regulatory proteins of cell cycle progression including CDKN1B. This interaction is required for correct intracellular transport and degradation of CDKN1B. This chain is Nuclear pore complex protein Nup50 (NUP50), found in Homo sapiens (Human).